Here is a 778-residue protein sequence, read N- to C-terminus: Endonuclease MutS2 (778 aa).

328 to 335 lines the ATP pocket; it reads GPNTGGKT. In terms of domain architecture, Smr spans 702–777; that stretch reads LDLRGKRYEE…GSGATIVTFK (76 aa).

Belongs to the DNA mismatch repair MutS family. MutS2 subfamily. Homodimer. Binds to stalled ribosomes, contacting rRNA.

Endonuclease that is involved in the suppression of homologous recombination and thus may have a key role in the control of bacterial genetic diversity. In terms of biological role, acts as a ribosome collision sensor, splitting the ribosome into its 2 subunits. Detects stalled/collided 70S ribosomes which it binds and splits by an ATP-hydrolysis driven conformational change. Acts upstream of the ribosome quality control system (RQC), a ribosome-associated complex that mediates the extraction of incompletely synthesized nascent chains from stalled ribosomes and their subsequent degradation. Probably generates substrates for RQC. The chain is Endonuclease MutS2 from Streptococcus pneumoniae (strain Hungary19A-6).